A 590-amino-acid chain; its full sequence is Beta-glucosidase 29 (590 aa).

Residues 1 to 21 (MNVQIFILLLIISWLTPKITS) form the signal peptide. A beta-D-glucoside contacts are provided by residues Q48, H151, and 196–197 (NE). E197 serves as the catalytic Proton donor. Cysteines 216 and 224 form a disulfide. N255 and N331 each carry an N-linked (GlcNAc...) asparagine glycan. A beta-D-glucoside is bound at residue Y341. N-linked (GlcNAc...) asparagine glycosylation is present at N371. Residues E413, W463, 470 to 471 (EW), and F479 each bind a beta-D-glucoside. E413 acts as the Nucleophile in catalysis. 2 N-linked (GlcNAc...) asparagine glycosylation sites follow: N522 and N553.

The protein belongs to the glycosyl hydrolase 1 family.

It catalyses the reaction Hydrolysis of terminal, non-reducing beta-D-glucosyl residues with release of beta-D-glucose.. The protein is Beta-glucosidase 29 of Arabidopsis thaliana (Mouse-ear cress).